A 210-amino-acid polypeptide reads, in one-letter code: Mating-type-like protein ALPHA2, silenced copy at MTL3 (210 aa).

The segment at residues 108–170 (ASYRGHRFTR…NRRRKQKSIY (63 aa)) is a DNA-binding region (homeobox; TALE-type).

This sequence belongs to the TALE/M-ATYP homeobox family.

The protein resides in the nucleus. Mating type proteins are sequence specific DNA-binding proteins that act as master switches in yeast differentiation by controlling gene expression in a cell type-specific fashion. The protein is Mating-type-like protein ALPHA2, silenced copy at MTL3 (MTL3alpha2) of Candida glabrata (strain ATCC 2001 / BCRC 20586 / JCM 3761 / NBRC 0622 / NRRL Y-65 / CBS 138) (Yeast).